Consider the following 48-residue polypeptide: ATP synthase protein 8 (48 aa).

Residues 4–24 (LVPFYFINILSFGFLIFTVLL) traverse the membrane as a helical segment.

This sequence belongs to the ATPase protein 8 family. F-type ATPases have 2 components, CF(1) - the catalytic core - and CF(0) - the membrane proton channel.

Its subcellular location is the mitochondrion membrane. Its function is as follows. Mitochondrial membrane ATP synthase (F(1)F(0) ATP synthase or Complex V) produces ATP from ADP in the presence of a proton gradient across the membrane which is generated by electron transport complexes of the respiratory chain. F-type ATPases consist of two structural domains, F(1) - containing the extramembraneous catalytic core and F(0) - containing the membrane proton channel, linked together by a central stalk and a peripheral stalk. During catalysis, ATP synthesis in the catalytic domain of F(1) is coupled via a rotary mechanism of the central stalk subunits to proton translocation. Part of the complex F(0) domain. Minor subunit located with subunit a in the membrane. This Schizosaccharomyces pombe (strain 972 / ATCC 24843) (Fission yeast) protein is ATP synthase protein 8 (atp8).